We begin with the raw amino-acid sequence, 267 residues long: MENRNLQDAKRIVVKVGTSSLIRANGKINLQAIDELCYTLSGLVNEDKEVVLVSSGAVGVGLANMGLVQRPKQIPEQQALAAIGQSQLMTIYQQRFAMYSQKTSQILLTHDVLTYPESRENVLNTFNELLKWKVIPVVNENDTVAVDEMDHQTSFGDNDWLSAVVASGIDADLLIVLSDIDGLFNKNPKKYADANLISEVTEINEKITGAAGGTGSRFGTGGMATKIKAMDRMINEGRKAVLANGKRPSIIFEILNGKQIGTLFHKK.

ATP is bound at residue Lys-15. The substrate site is built by Ser-55, Asp-142, and Asn-158. ATP is bound by residues 178–179 (SD) and 220–226 (TGGMATK).

This sequence belongs to the glutamate 5-kinase family.

The protein localises to the cytoplasm. It catalyses the reaction L-glutamate + ATP = L-glutamyl 5-phosphate + ADP. The protein operates within amino-acid biosynthesis; L-proline biosynthesis; L-glutamate 5-semialdehyde from L-glutamate: step 1/2. Functionally, catalyzes the transfer of a phosphate group to glutamate to form L-glutamate 5-phosphate. The sequence is that of Glutamate 5-kinase from Ligilactobacillus salivarius (strain UCC118) (Lactobacillus salivarius).